Reading from the N-terminus, the 261-residue chain is Thiamine thiazole synthase (261 aa).

Residues Ala-33, Glu-52 to Arg-53, Gly-60, Val-124, and His-152 to Asp-154 each bind NAD(+). Residues Asp-154 and His-169 each contribute to the Fe cation site. Residue Ile-219 coordinates NAD(+). Arg-229 serves as a coordination point for glycine.

Belongs to the THI4 family. As to quaternary structure, homooctamer; tetramer of dimers. Requires Fe(2+) as cofactor.

It carries out the reaction hydrogen sulfide + glycine + NAD(+) = ADP-5-ethyl-4-methylthiazole-2-carboxylate + nicotinamide + 3 H2O + H(+). It functions in the pathway cofactor biosynthesis; thiamine diphosphate biosynthesis. Functionally, involved in the biosynthesis of the thiazole moiety of thiamine. Catalyzes the conversion of NAD and glycine to adenosine diphosphate 5-(2-hydroxyethyl)-4-methylthiazole-2-carboxylate (ADT), an adenylated thiazole intermediate, using free sulfide as a source of sulfur. The sequence is that of Thiamine thiazole synthase from Pyrobaculum calidifontis (strain DSM 21063 / JCM 11548 / VA1).